A 131-amino-acid polypeptide reads, in one-letter code: Small ribosomal subunit protein bS6 (131 aa).

Residues 98 to 131 (EASPMVKAKDERRERREDFANETADDSEAGDSEE) are disordered. Basic and acidic residues predominate over residues 104–116 (KAKDERRERREDF). Residues 120–131 (TADDSEAGDSEE) show a composition bias toward acidic residues.

The protein belongs to the bacterial ribosomal protein bS6 family.

In terms of biological role, binds together with bS18 to 16S ribosomal RNA. The polypeptide is Small ribosomal subunit protein bS6 (Klebsiella pneumoniae subsp. pneumoniae (strain ATCC 700721 / MGH 78578)).